Here is a 311-residue protein sequence, read N- to C-terminus: Protoheme IX farnesyltransferase (311 aa).

8 helical membrane-spanning segments follow: residues 19 to 39 (VLAY…VATI), 55 to 75 (ILAT…LNCV), 101 to 121 (NAFV…WWQA), 123 to 143 (LLSG…YTLG), 169 to 189 (AVTG…FFWT), 221 to 241 (VTKQ…ALVP), 242 to 262 (ATGV…LLMA), and 290 to 310 (VVFC…GSFF).

It belongs to the UbiA prenyltransferase family. Protoheme IX farnesyltransferase subfamily.

Its subcellular location is the cell membrane. The enzyme catalyses heme b + (2E,6E)-farnesyl diphosphate + H2O = Fe(II)-heme o + diphosphate. It participates in porphyrin-containing compound metabolism; heme O biosynthesis; heme O from protoheme: step 1/1. In terms of biological role, converts heme B (protoheme IX) to heme O by substitution of the vinyl group on carbon 2 of heme B porphyrin ring with a hydroxyethyl farnesyl side group. This chain is Protoheme IX farnesyltransferase, found in Nocardia farcinica (strain IFM 10152).